We begin with the raw amino-acid sequence, 410 residues long: Cysteine desulfurase IscS (410 aa).

Pyridoxal 5'-phosphate is bound by residues Ala-80–Thr-81, Asn-160, Gln-188, and Ser-208–His-210. Position 211 is an N6-(pyridoxal phosphate)lysine (Lys-211). Pyridoxal 5'-phosphate is bound at residue Thr-248. Residue Cys-334 is the Cysteine persulfide intermediate of the active site. Cys-334 is a binding site for [2Fe-2S] cluster.

The protein belongs to the class-V pyridoxal-phosphate-dependent aminotransferase family. NifS/IscS subfamily. Homodimer. Forms a heterotetramer with IscU, interacts with other sulfur acceptors. Pyridoxal 5'-phosphate is required as a cofactor.

It localises to the cytoplasm. It catalyses the reaction (sulfur carrier)-H + L-cysteine = (sulfur carrier)-SH + L-alanine. The protein operates within cofactor biosynthesis; iron-sulfur cluster biosynthesis. In terms of biological role, master enzyme that delivers sulfur to a number of partners involved in Fe-S cluster assembly, tRNA modification or cofactor biosynthesis. Catalyzes the removal of elemental sulfur atoms from cysteine to produce alanine. Functions as a sulfur delivery protein for Fe-S cluster synthesis onto IscU, an Fe-S scaffold assembly protein, as well as other S acceptor proteins. The polypeptide is Cysteine desulfurase IscS (Rickettsia rickettsii (strain Iowa)).